Here is a 1174-residue protein sequence, read N- to C-terminus: Ankyrin repeat and LEM domain-containing protein 2 homolog (1174 aa).

Low complexity-rich tracts occupy residues 37-56, 150-164, 174-198, and 205-219; these read NPAS…SAAS, SSPT…SSPT, LGSN…SSSN, and QQQM…PQQP. Disordered regions lie at residues 37–74 and 141–230; these read NPAS…YEDP and PIIS…PFRA. The ANK repeat unit spans residues 338–367; it reads RGETPLHFAAKNGHVAMVEVLVSYPECKSL. Disordered stretches follow at residues 519 to 543 and 961 to 981; these read AEAT…HNNN and GSSS…SPGI. The segment covering 521-532 has biased composition (polar residues); sequence ATSSPKPTKNVP. Residues 533–543 are compositionally biased toward low complexity; sequence NGTNECEHNNN.

This sequence belongs to the ANKLE2 family.

It localises to the endoplasmic reticulum. Its subcellular location is the nucleus envelope. The protein resides in the cytoplasm. In terms of biological role, involved in brain development probably by regulating asymmetric division of neuroblasts. Regulates neuroblast asymmetric cell division by controlling asymmetric protein localization of Mira, Baz, Par-6 and aPKC, and spindle alignment. Also, regulates the localization of kinase Ball during mitosis, specifically maintaining Ball in the nucleus during interphase. Required for proper ER and nuclear envelope morphology in neuroblasts. The chain is Ankyrin repeat and LEM domain-containing protein 2 homolog from Drosophila melanogaster (Fruit fly).